Consider the following 654-residue polypeptide: Sphingosine kinase 2 (654 aa).

Residues 1 to 17 (MNGHLEAEEQQDQRPDQ) are compositionally biased toward basic and acidic residues. Positions 1-28 (MNGHLEAEEQQDQRPDQELTGSWGHGPR) are disordered. A required for binding to sulfatide and phosphoinositides and for membrane localizatione region spans residues 1 to 175 (MNGHLEAEEQ…LPGDGEITPD (175 aa)). Positions 122–130 (RGRRGARRR) match the Nuclear localization signal motif. Residues 178-325 (PRPPRLLLLV…LDLLSVTLAS (148 aa)) enclose the DAGKc domain. ATP is bound by residues 188-190 (NPF) and 220-224 (TERQN). 245–248 (SGDG) contacts substrate. Aspartate 247 functions as the Proton donor/acceptor in the catalytic mechanism. Residues glutamate 252 and 277–279 (GSG) contribute to the ATP site. Aspartate 344 contributes to the substrate binding site. Arginine 351 and arginine 357 together coordinate ATP. Serine 387 carries the post-translational modification Phosphoserine; by MAPK. Serine 393 and serine 399 each carry phosphoserine. The tract at residues 400-509 (ELTLTPDPAP…PLPTPDARVG (110 aa)) is disordered. The Nuclear export signal signature appears at 416–425 (LHRSVSDLPL). Serine 419 and serine 421 each carry phosphoserine; by PKD. Residues 447–461 (NGGGPELAGDWGGAG) show a composition bias toward gly residues. Positions 462–482 (DAPLSPDPLLSSPPGSPKAAL) are enriched in low complexity. Serine 477 is modified (phosphoserine). Threonine 614 is subject to Phosphothreonine; by MAPK. Residue 622 to 624 (DGE) participates in ATP binding.

In terms of assembly, interacts with histone H3. Interacts with HDAC1, HDAC2, MBD2 and SIN3A. Interacts with EEF1A1; the interaction enhances SPHK2 kinase activity. Interacts with PHB2. Mg(2+) serves as cofactor. Phosphorylated by PKD on Ser-419 and Ser-421 upon PMA treatment. Phosphorylation induces export from the nucleus to the cytoplasm. Phosphorylated by MAPK1 and MAPK2 at Ser-387 and Thr-614, phosphorylation is induced by agonists such as EGF and PMA and increases kinase activity. In terms of processing, cleaved by CASP1 in apoptotic cells. The truncated form is released from cells. In terms of tissue distribution, mainly expressed in adult kidney, liver, and brain. Expressed in cerebral cortex and hippocampus (at protein level). Isoform 1 is the predominant form expressed in most tissues.

The protein localises to the cytoplasm. Its subcellular location is the nucleus. It is found in the endoplasmic reticulum. The protein resides in the mitochondrion inner membrane. It localises to the lysosome membrane. It catalyses the reaction a sphingoid base + ATP = a sphingoid 1-phosphate + ADP + H(+). The enzyme catalyses sphing-4-enine + ATP = sphing-4-enine 1-phosphate + ADP + H(+). The catalysed reaction is sphinganine + ATP = sphinganine 1-phosphate + ADP + H(+). It carries out the reaction (4R)-hydroxysphinganine + ATP = (4R)-hydroxysphinganine 1-phosphate + ADP + H(+). Its activity is regulated as follows. Inhibited by sulfatide. Kinase activity is increased by phosphorylation by MAPK2 upon PMA or EGF treatments. Functionally, catalyzes the phosphorylation of sphingosine to form sphingosine-1-phosphate (SPP), a lipid mediator with both intra- and extracellular functions. Also acts on D-erythro-dihydrosphingosine, D-erythro-sphingosine and L-threo-dihydrosphingosine. Binds phosphoinositides. In contrast to prosurvival SPHK1, has a positive effect on intracellular ceramide levels, inhibits cells growth and enhances apoptosis. In mitochondria, is important for cytochrome-c oxidase assembly and mitochondrial respiration. The SPP produced in mitochondria binds PHB2 and modulates the regulation via PHB2 of complex IV assembly and respiration. In nucleus, plays a role in epigenetic regulation of gene expression. Interacts with HDAC1 and HDAC2 and, through SPP production, inhibits their enzymatic activity, preventing the removal of acetyl groups from lysine residues with histones. Up-regulates acetylation of histone H3-K9, histone H4-K5 and histone H2B-K12. In nucleus, may have an inhibitory effect on DNA synthesis and cell cycle. In mast cells, is the main regulator of SPP production which mediates calcium influx, NF-kappa-B activation, cytokine production, such as TNF and IL6, and degranulation of mast cells. In dopaminergic neurons, is involved in promoting mitochondrial functions regulating ATP and ROS levels. Also involved in the regulation of glucose and lipid metabolism. The chain is Sphingosine kinase 2 from Homo sapiens (Human).